The chain runs to 274 residues: Dehydration-responsive element-binding protein 2A (274 aa).

Basic and acidic residues-rich tracts occupy residues Met1–Asp10 and Lys35–Ser50. Residues Met1 to Ala75 are disordered. Residues Ala75 to Ala132 constitute a DNA-binding region (AP2/ERF).

It belongs to the AP2/ERF transcription factor family. ERF subfamily.

It localises to the nucleus. In terms of biological role, transcriptional activator that binds specifically to the DNA sequence 5'-[AG]CCGAC-3'. Binding to the C-repeat/DRE element mediates high salinity- and dehydration-inducible transcription. The polypeptide is Dehydration-responsive element-binding protein 2A (DREB2A) (Oryza sativa subsp. indica (Rice)).